A 275-amino-acid chain; its full sequence is 4-hydroxy-3-methylbut-2-enyl diphosphate reductase (275 aa).

[4Fe-4S] cluster is bound at residue cysteine 12. (2E)-4-hydroxy-3-methylbut-2-enyl diphosphate-binding residues include histidine 36 and histidine 70. Positions 36 and 70 each coordinate dimethylallyl diphosphate. The isopentenyl diphosphate site is built by histidine 36 and histidine 70. Residue cysteine 92 participates in [4Fe-4S] cluster binding. Histidine 120 serves as a coordination point for (2E)-4-hydroxy-3-methylbut-2-enyl diphosphate. Histidine 120 contributes to the dimethylallyl diphosphate binding site. Histidine 120 provides a ligand contact to isopentenyl diphosphate. Glutamate 122 serves as the catalytic Proton donor. Threonine 158 lines the (2E)-4-hydroxy-3-methylbut-2-enyl diphosphate pocket. Cysteine 186 is a binding site for [4Fe-4S] cluster. Residues serine 214, serine 215, asparagine 216, and serine 258 each contribute to the (2E)-4-hydroxy-3-methylbut-2-enyl diphosphate site. Residues serine 214, serine 215, asparagine 216, and serine 258 each contribute to the dimethylallyl diphosphate site. Isopentenyl diphosphate contacts are provided by serine 214, serine 215, asparagine 216, and serine 258.

The protein belongs to the IspH family. [4Fe-4S] cluster is required as a cofactor.

The enzyme catalyses isopentenyl diphosphate + 2 oxidized [2Fe-2S]-[ferredoxin] + H2O = (2E)-4-hydroxy-3-methylbut-2-enyl diphosphate + 2 reduced [2Fe-2S]-[ferredoxin] + 2 H(+). The catalysed reaction is dimethylallyl diphosphate + 2 oxidized [2Fe-2S]-[ferredoxin] + H2O = (2E)-4-hydroxy-3-methylbut-2-enyl diphosphate + 2 reduced [2Fe-2S]-[ferredoxin] + 2 H(+). Its pathway is isoprenoid biosynthesis; dimethylallyl diphosphate biosynthesis; dimethylallyl diphosphate from (2E)-4-hydroxy-3-methylbutenyl diphosphate: step 1/1. It participates in isoprenoid biosynthesis; isopentenyl diphosphate biosynthesis via DXP pathway; isopentenyl diphosphate from 1-deoxy-D-xylulose 5-phosphate: step 6/6. Its function is as follows. Catalyzes the conversion of 1-hydroxy-2-methyl-2-(E)-butenyl 4-diphosphate (HMBPP) into a mixture of isopentenyl diphosphate (IPP) and dimethylallyl diphosphate (DMAPP). Acts in the terminal step of the DOXP/MEP pathway for isoprenoid precursor biosynthesis. The polypeptide is 4-hydroxy-3-methylbut-2-enyl diphosphate reductase (Campylobacter hominis (strain ATCC BAA-381 / DSM 21671 / CCUG 45161 / LMG 19568 / NCTC 13146 / CH001A)).